A 320-amino-acid chain; its full sequence is MAIVNVNRFLKEVESTDLKIDAISSSELYKDATFFKPDVLNCIKRFESNVKVSSRSGDGLVLSDFKLLDDTEIDSIRKKSNKYKYLHYGVILVGIKAMLPNFRGMEGRVIVYDGACLDPKRGHICSYLFKFESDCCYFGLRPEHCLSTTDANLAKRFRFRVDFDCPQYEQDTELFALDIGVAYRCVNSARFLETKTGDSGWASQAISGCEALKFNEEIKMAILDRRSPLFLEEGAPNVHIEKRLFRGDKVRRSRSISAKRGPNSRVQEKRGFRSLSARIERFGKNEFGRRASASEAPPGRSISMEDSHRPGKGTSDGSSP.

Active-site residues include histidine 144, aspartate 171, and serine 199. 2 disordered regions span residues 251 to 270 (RRSRSISAKRGPNSRVQEKR) and 286 to 320 (EFGRRASASEAPPGRSISMEDSHRPGKGTSDGSSP).

The protein belongs to the tobamoviruses movement protein family.

Functionally, may play a role in virus cell to cell movement by increasing the size exclusion limit of plasmodesmata and forming a complex with viral RNA to assist its movement. May also have a papain-like protease activity and cleave the genome polyprotein. The polypeptide is Probable movement protein (Malus sylvestris (European crab apple)).